We begin with the raw amino-acid sequence, 215 residues long: Proteasome subunit beta (215 aa).

Positions 1-12 (MLGEIQDKVYKG) are cleaved as a propeptide — removed in mature form; by autocatalysis. Thr-13 functions as the Nucleophile in the catalytic mechanism.

The protein belongs to the peptidase T1B family. The 20S proteasome core is composed of 14 alpha and 14 beta subunits that assemble into four stacked heptameric rings, resulting in a barrel-shaped structure. The two inner rings, each composed of seven catalytic beta subunits, are sandwiched by two outer rings, each composed of seven alpha subunits. The catalytic chamber with the active sites is on the inside of the barrel. Has a gated structure, the ends of the cylinder being occluded by the N-termini of the alpha-subunits. Is capped at one or both ends by the proteasome regulatory ATPase, PAN.

The protein localises to the cytoplasm. The catalysed reaction is Cleavage of peptide bonds with very broad specificity.. The formation of the proteasomal ATPase PAN-20S proteasome complex, via the docking of the C-termini of PAN into the intersubunit pockets in the alpha-rings, triggers opening of the gate for substrate entry. Interconversion between the open-gate and close-gate conformations leads to a dynamic regulation of the 20S proteasome proteolysis activity. Functionally, component of the proteasome core, a large protease complex with broad specificity involved in protein degradation. The protein is Proteasome subunit beta of Archaeoglobus profundus (strain DSM 5631 / JCM 9629 / NBRC 100127 / Av18).